The primary structure comprises 1406 residues: DNA-directed RNA polymerase subunit beta' (1406 aa).

Cys70, Cys72, Cys85, and Cys88 together coordinate Zn(2+). Residues Asp460, Asp462, and Asp464 each coordinate Mg(2+). Residues Cys814, Cys888, Cys895, and Cys898 each coordinate Zn(2+).

Belongs to the RNA polymerase beta' chain family. In terms of assembly, the RNAP catalytic core consists of 2 alpha, 1 beta, 1 beta' and 1 omega subunit. When a sigma factor is associated with the core the holoenzyme is formed, which can initiate transcription. Mg(2+) is required as a cofactor. It depends on Zn(2+) as a cofactor.

It carries out the reaction RNA(n) + a ribonucleoside 5'-triphosphate = RNA(n+1) + diphosphate. DNA-dependent RNA polymerase catalyzes the transcription of DNA into RNA using the four ribonucleoside triphosphates as substrates. In Colwellia psychrerythraea (strain 34H / ATCC BAA-681) (Vibrio psychroerythus), this protein is DNA-directed RNA polymerase subunit beta'.